A 443-amino-acid chain; its full sequence is Enolase B (443 aa).

2 residues coordinate substrate: H156 and E165. Residue E208 is the Proton donor of the active site. Mg(2+)-binding residues include D243, E296, and D323. Positions 296 and 323 each coordinate substrate. The active-site Proton acceptor is the K348. Substrate-binding positions include 375–378 and K399; that span reads SHRS.

This sequence belongs to the enolase family. In terms of assembly, homodimer. It depends on Mg(2+) as a cofactor.

Its subcellular location is the cytoplasm. It catalyses the reaction (2R)-2-phosphoglycerate = phosphoenolpyruvate + H2O. It participates in carbohydrate degradation; glycolysis; pyruvate from D-glyceraldehyde 3-phosphate: step 4/5. The protein is Enolase B (enoB) of Dictyostelium discoideum (Social amoeba).